The sequence spans 35 residues: U2-agatoxin-Aop1a (35 aa).

Intrachain disulfides connect cysteine 3-cysteine 19, cysteine 10-cysteine 24, and cysteine 18-cysteine 34. Leucine amide is present on leucine 35.

Belongs to the neurotoxin 01 (U2-agtx) family. As to expression, expressed by the venom gland.

The protein localises to the secreted. Its function is as follows. Insect-selective toxin causing rapid but reversible paralysis in crickets. Suppresses the excitatory postsynaptic potentials evoked in lobster neuromuscular synaptic preparations, possibly by blocking the presynaptic calcium channel (Cav). Induces instantaneous reversible paralysis when injected into crickets. The protein is U2-agatoxin-Aop1a of Allagelena opulenta (Funnel weaving spider).